The sequence spans 505 residues: Glutamyl-tRNA(Gln) amidotransferase subunit B, mitochondrial (505 aa).

It belongs to the GatB/GatE family. GatB subfamily. Subunit of the heterotrimeric GatCAB amidotransferase (AdT) complex, composed of A, B and C subunits.

It localises to the mitochondrion. It carries out the reaction L-glutamyl-tRNA(Gln) + L-glutamine + ATP + H2O = L-glutaminyl-tRNA(Gln) + L-glutamate + ADP + phosphate + H(+). Allows the formation of correctly charged Gln-tRNA(Gln) through the transamidation of misacylated Glu-tRNA(Gln) in the mitochondria. The reaction takes place in the presence of glutamine and ATP through an activated gamma-phospho-Glu-tRNA(Gln). The polypeptide is Glutamyl-tRNA(Gln) amidotransferase subunit B, mitochondrial (Schizosaccharomyces japonicus (strain yFS275 / FY16936) (Fission yeast)).